The following is an 89-amino-acid chain: uncharacterized protein (89 aa).

This is an uncharacterized protein from Shigella flexneri.